A 198-amino-acid polypeptide reads, in one-letter code: Outer-membrane lipoprotein carrier protein (198 aa).

An N-terminal signal peptide occupies residues 1–16; that stretch reads MKKWLVVFFLSASALA.

This sequence belongs to the LolA family. Monomer.

The protein resides in the periplasm. Functionally, participates in the translocation of lipoproteins from the inner membrane to the outer membrane. Only forms a complex with a lipoprotein if the residue after the N-terminal Cys is not an aspartate (The Asp acts as a targeting signal to indicate that the lipoprotein should stay in the inner membrane). The polypeptide is Outer-membrane lipoprotein carrier protein (Vibrio vulnificus (strain YJ016)).